The following is a 96-amino-acid chain: Protein C4 (96 aa).

Gly2 carries N-myristoyl glycine; by host lipidation. The interval 66 to 96 (STDDLQGEDSRQPMTLTPRQLTQEVSRRLLM) is disordered. A compositionally biased stretch (polar residues) spans 77–89 (QPMTLTPRQLTQE).

It belongs to the geminiviridae protein AC4/C4 family.

It is found in the host cell membrane. Its function is as follows. Pathogenicity determinant. May act as a suppressor of RNA-mediated gene silencing, also known as post-transcriptional gene silencing (PTGS), a mechanism of plant viral defense that limits the accumulation of viral RNAs. The polypeptide is Protein C4 (Cynanchum acutum (Tomato)).